Reading from the N-terminus, the 290-residue chain is Arylamine N-acetyltransferase 1 (290 aa).

N-acetylmethionine is present on methionine 1. Cysteine 68 (acyl-thioester intermediate) is an active-site residue. Serine 103 is a CoA binding site. 106–107 serves as a coordination point for substrate; that stretch reads VH. Residues histidine 107 and aspartate 122 contribute to the active site. Tyrosine 208 contacts CoA.

It belongs to the arylamine N-acetyltransferase family.

Its subcellular location is the cytoplasm. It carries out the reaction an arylamine + acetyl-CoA = an N-acetylarylamine + CoA. In terms of biological role, participates in the detoxification of a plethora of hydrazine and arylamine drugs. Acetylates both arylamines and arylalkylamines. This is Arylamine N-acetyltransferase 1 (Nat1) from Rattus norvegicus (Rat).